The chain runs to 91 residues: Small ribosomal subunit protein bS18 (91 aa).

Low complexity predominate over residues 1–14 (MTNQNQSQTQTTQT). Residues 1-24 (MTNQNQSQTQTTQTVEKVSSRQKK) are disordered.

This sequence belongs to the bacterial ribosomal protein bS18 family. As to quaternary structure, part of the 30S ribosomal subunit. Forms a tight heterodimer with protein bS6.

Binds as a heterodimer with protein bS6 to the central domain of the 16S rRNA, where it helps stabilize the platform of the 30S subunit. This Caldicellulosiruptor saccharolyticus (strain ATCC 43494 / DSM 8903 / Tp8T 6331) protein is Small ribosomal subunit protein bS18.